The primary structure comprises 331 residues: Adenosine deaminase (331 aa).

Residues His12 and His14 each contribute to the Zn(2+) site. Positions 14, 16, and 170 each coordinate substrate. His197 contacts Zn(2+). The active-site Proton donor is Glu200. Position 278 (Asp278) interacts with Zn(2+). Residue Asp279 coordinates substrate.

Belongs to the metallo-dependent hydrolases superfamily. Adenosine and AMP deaminases family. Adenosine deaminase subfamily. It depends on Zn(2+) as a cofactor.

The enzyme catalyses adenosine + H2O + H(+) = inosine + NH4(+). The catalysed reaction is 2'-deoxyadenosine + H2O + H(+) = 2'-deoxyinosine + NH4(+). Functionally, catalyzes the hydrolytic deamination of adenosine and 2-deoxyadenosine. The chain is Adenosine deaminase from Shewanella putrefaciens (strain CN-32 / ATCC BAA-453).